Here is a 206-residue protein sequence, read N- to C-terminus: Holliday junction branch migration complex subunit RuvA (206 aa).

Positions 1 to 64 (MIGRLRGNLL…EDAQLLYGFN (64 aa)) are domain I. A domain II region spans residues 65 to 143 (TKKERALFRE…GWGAGDLFTP (79 aa)). The segment at 144-157 (ADTTSMDDASDLIS) is flexible linker. Residues 158–206 (SPQSAQDEAVSALISLGYKPVQASKMVSQVAKPDMTSESLIRESLKSMI) form a domain III region.

This sequence belongs to the RuvA family. Homotetramer. Forms an RuvA(8)-RuvB(12)-Holliday junction (HJ) complex. HJ DNA is sandwiched between 2 RuvA tetramers; dsDNA enters through RuvA and exits via RuvB. An RuvB hexamer assembles on each DNA strand where it exits the tetramer. Each RuvB hexamer is contacted by two RuvA subunits (via domain III) on 2 adjacent RuvB subunits; this complex drives branch migration. In the full resolvosome a probable DNA-RuvA(4)-RuvB(12)-RuvC(2) complex forms which resolves the HJ.

The protein resides in the cytoplasm. Functionally, the RuvA-RuvB-RuvC complex processes Holliday junction (HJ) DNA during genetic recombination and DNA repair, while the RuvA-RuvB complex plays an important role in the rescue of blocked DNA replication forks via replication fork reversal (RFR). RuvA specifically binds to HJ cruciform DNA, conferring on it an open structure. The RuvB hexamer acts as an ATP-dependent pump, pulling dsDNA into and through the RuvAB complex. HJ branch migration allows RuvC to scan DNA until it finds its consensus sequence, where it cleaves and resolves the cruciform DNA. The protein is Holliday junction branch migration complex subunit RuvA of Aliivibrio salmonicida (strain LFI1238) (Vibrio salmonicida (strain LFI1238)).